The following is a 215-amino-acid chain: Pyrrolidone-carboxylate peptidase (215 aa).

Catalysis depends on residues glutamate 78, cysteine 141, and histidine 165.

It belongs to the peptidase C15 family. As to quaternary structure, homotetramer.

Its subcellular location is the cytoplasm. It carries out the reaction Release of an N-terminal pyroglutamyl group from a polypeptide, the second amino acid generally not being Pro.. In terms of biological role, removes 5-oxoproline from various penultimate amino acid residues except L-proline. The polypeptide is Pyrrolidone-carboxylate peptidase (pcp) (Streptococcus pyogenes serotype M1).